We begin with the raw amino-acid sequence, 489 residues long: UDP-N-acetylmuramoyl-L-alanyl-D-glutamate--2,6-diaminopimelate ligase (489 aa).

UDP-N-acetyl-alpha-D-muramoyl-L-alanyl-D-glutamate is bound at residue serine 30. Residue 108 to 114 (GTNGKTT) participates in ATP binding. UDP-N-acetyl-alpha-D-muramoyl-L-alanyl-D-glutamate-binding positions include asparagine 149, 150-151 (TT), serine 177, glutamine 183, and arginine 185. Position 217 is an N6-carboxylysine (lysine 217). Meso-2,6-diaminopimelate-binding positions include arginine 383, 407–410 (DNPR), glycine 459, and glutamate 463. Residues 407–410 (DNPR) carry the Meso-diaminopimelate recognition motif motif.

Belongs to the MurCDEF family. MurE subfamily. The cofactor is Mg(2+). Carboxylation is probably crucial for Mg(2+) binding and, consequently, for the gamma-phosphate positioning of ATP.

The protein resides in the cytoplasm. It catalyses the reaction UDP-N-acetyl-alpha-D-muramoyl-L-alanyl-D-glutamate + meso-2,6-diaminopimelate + ATP = UDP-N-acetyl-alpha-D-muramoyl-L-alanyl-gamma-D-glutamyl-meso-2,6-diaminopimelate + ADP + phosphate + H(+). Its pathway is cell wall biogenesis; peptidoglycan biosynthesis. In terms of biological role, catalyzes the addition of meso-diaminopimelic acid to the nucleotide precursor UDP-N-acetylmuramoyl-L-alanyl-D-glutamate (UMAG) in the biosynthesis of bacterial cell-wall peptidoglycan. In Geobacillus kaustophilus (strain HTA426), this protein is UDP-N-acetylmuramoyl-L-alanyl-D-glutamate--2,6-diaminopimelate ligase.